The following is a 292-amino-acid chain: Mycothiol acetyltransferase (292 aa).

2 consecutive N-acetyltransferase domains span residues Ala13–Gln168 and Lys159–Lys292. Residue Glu40 coordinates 1D-myo-inositol 2-(L-cysteinylamino)-2-deoxy-alpha-D-glucopyranoside. Residue Leu77–Val79 coordinates acetyl-CoA. Residues Glu179, Lys218, and Glu226 each contribute to the 1D-myo-inositol 2-(L-cysteinylamino)-2-deoxy-alpha-D-glucopyranoside site. Acetyl-CoA contacts are provided by residues Val230–Leu232 and Arg237–Asp243. Tyr264 serves as a coordination point for 1D-myo-inositol 2-(L-cysteinylamino)-2-deoxy-alpha-D-glucopyranoside.

The protein belongs to the acetyltransferase family. MshD subfamily. In terms of assembly, monomer.

The enzyme catalyses 1D-myo-inositol 2-(L-cysteinylamino)-2-deoxy-alpha-D-glucopyranoside + acetyl-CoA = mycothiol + CoA + H(+). In terms of biological role, catalyzes the transfer of acetyl from acetyl-CoA to desacetylmycothiol (Cys-GlcN-Ins) to form mycothiol. In Corynebacterium glutamicum (strain R), this protein is Mycothiol acetyltransferase.